The sequence spans 292 residues: 4'-phosphopantetheinyl transferase 1 (292 aa).

It belongs to the P-Pant transferase superfamily.

It carries out the reaction apo-[ACP] + CoA = holo-[ACP] + adenosine 3',5'-bisphosphate + H(+). Functionally, transfers the 4'-phosphopantetheine moiety from coenzyme A to a Ser of an acyl-carrier-protein. The enzyme is able to transfer the cofactor to a broad range of enzymes with acyl- or peptidyl-carrier protein domains. Required for primary biological processes such as growth and asexual/sexual development, and activates target enzymes involved in the synthesis of metabolites such as fatty acids, nonribosomal peptides and polyketides such as the gamma-pyrones fusapyrone (FPY) and deoxyfusapyrone (dFPY). The protein is 4'-phosphopantetheinyl transferase 1 of Fusarium mangiferae (Mango malformation disease fungus).